A 538-amino-acid polypeptide reads, in one-letter code: Guanine nucleotide-binding protein-like 3 (538 aa).

Residues 1-45 (MKRPKLKKASKRMTCHKRYKIQKKVREHHRKLRKEAKKRGHKKPR) are compositionally biased toward basic residues. Disordered stretches follow at residues 1–57 (MKRP…APFK) and 69–126 (QQLE…NPKK). The basic stretch occupies residues 2–46 (KRPKLKKASKRMTCHKRYKIQKKVREHHRKLRKEAKKRGHKKPRK). The stretch at 54–95 (APFKEALLREAELRKQQLEELKQQQKLDRQKEQERKRKLEVS) forms a coiled coil. A compositionally biased stretch (basic and acidic residues) spans 69–93 (QQLEELKQQQKLDRQKEQERKRKLE). K79 is subject to N6-acetyllysine. K91 participates in a covalent cross-link: Glycyl lysine isopeptide (Lys-Gly) (interchain with G-Cter in SUMO2). Phosphoserine is present on residues S95 and S101. A compositionally biased stretch (basic residues) spans 114–126 (RKKAKAGKQNPKK). In terms of domain architecture, CP-type G spans 129–307 (CQELKKVIEA…IIDSPCLIIS (179 aa)). 176–179 (NKSD) contacts GTP. Residues K177, K248, K262, and K270 each participate in a glycyl lysine isopeptide (Lys-Gly) (interchain with G-Cter in SUMO2) cross-link. 256–263 (GFPNVGKS) is a GTP binding site. Positions 277–451 (VGISMGLTRS…HLTNRILFRS (175 aa)) are intermediate. 300 to 303 (DSPC) contacts GTP. Residues 460–475 (DEKDIVEESPRQTEDK) are compositionally biased toward basic and acidic residues. Residues 460-532 (DEKDIVEESP…RASQEDETYD (73 aa)) are acidic. The tract at residues 460-538 (DEKDIVEESP…ETYDFTTDYI (79 aa)) is disordered. A phosphoserine mark is found at S493, S505, and S518. Over residues 506–518 (PEQSTAGKPSDGS) the composition is skewed to polar residues.

The protein belongs to the TRAFAC class YlqF/YawG GTPase family. Interacts with MDM2; this interaction stabilizes MDM2. Interaction with MDM2 occurs in the nucleoplasm and is triggered by a nucleolar release mechanism, such as mitosis-induced nucleolar disassembly. Indirectly interacts with TP53, via MDM2-binding. Interacts with TSC22D1 isoform 2. As to expression, expressed in the adult bone marrow population that is enriched in hematopoietic stem cells.

It localises to the nucleus. The protein resides in the nucleolus. Functionally, may be required to maintain the proliferative capacity of stem cells. Stabilizes MDM2 by preventing its ubiquitination, and hence proteasomal degradation. The protein is Guanine nucleotide-binding protein-like 3 (Gnl3) of Mus musculus (Mouse).